The chain runs to 300 residues: MENTKTNASSSGMSSSSSFSVSYAEEMLLADEVSKINSMSILGPNQLKLCTQLVLSNGAAPVVLSLVSKEKKSILNRMLPKIGQRMYVHHSAIYLLYMPNILKSSSGSITLKLFNEATGELVDVDTDHDATQACIFAGRYPRSILAKDAAKGHDLKLVVHAVASTNANSAVGVLYPIWEDELSRKQILERGADFLKFPIAETEPVRDLLNAGKLTDFVLDRTRLGVGSKNDPSPVLLEPRAKITGKAKTVFIPEGPSVPNTTINGMAPTVRIDAGSPKGLGVPKGFTYESFIKDEILPDH.

It belongs to the alfamovirus movement protein family.

It is found in the host cell junction. Its subcellular location is the host plasmodesma. Its function is as follows. Transports viral genome to neighboring plant cells directly through plasmosdesmata, without any budding. The movement protein allows efficient cell to cell propagation, by bypassing the host cell wall barrier. Acts by forming a tubular structure at the host plasmodesmata, enlarging it enough to allow free passage of virion capsids. This Alfalfa mosaic virus (AMV) protein is Movement protein.